Reading from the N-terminus, the 106-residue chain is ER membrane protein complex subunit 5 (106 aa).

Residues 1–12 (MESSTINAKKIS) are Cytoplasmic-facing. The helical transmembrane segment at 13 to 33 (VLLTLFSIIGYTAYSAHESIL) threads the bilayer. Over 34–46 (EIRQDGKLPLDIK) the chain is Lumenal. A helical membrane pass occupies residues 47-67 (CEVILVTLLFTFTTVIIASPL). Residues 68 to 106 (RSIQLNKWSHQRSDLAFLNSRTNFLRIKELKEKIEKVKN) are Cytoplasmic-facing.

The protein belongs to the membrane magnesium transporter (TC 1.A.67) family. Component of the ER membrane protein complex (EMC).

It localises to the endoplasmic reticulum membrane. Its function is as follows. The EMC seems to be required for efficient folding of proteins in the endoplasmic reticulum (ER). This chain is ER membrane protein complex subunit 5 (emc5), found in Schizosaccharomyces pombe (strain 972 / ATCC 24843) (Fission yeast).